A 544-amino-acid chain; its full sequence is E3 ubiquitin-protein ligase makorin-3 (544 aa).

Disordered regions lie at residues 1–46 (MEES…VSSA) and 117–144 (DLSG…KMAT). Low complexity-rich tracts occupy residues 9–19 (EAHAAAGAEAG) and 36–46 (AAGASAGVSSA). 2 C3H1-type zinc fingers span residues 92-119 (WTKQ…HDLS) and 274-301 (PMPL…HGEI). The makorin-type Cys-His stretch occupies residues 302-329 (CDMCGQQALHPWDAAQQEAHRRACVEAH). The RING-type zinc finger occupies 347 to 401 (CGICMEVVYEKADPSDRRFGILFSCNHTYCLRCIRRWRSATQFENRISKSCPQCR). The C3H1-type 3 zinc finger occupies 430-459 (GMSQKACRYFAGGLGHCPFGEFCFYKHEYP).

In terms of tissue distribution, mainly expressed in mouse brain and reproductive system including testis and ovary. Ubiquitously detected at low levels throughout the entire embryo, but expression is highest in the ventricular layers of the brain.

The protein localises to the nucleus. The enzyme catalyses S-ubiquitinyl-[E2 ubiquitin-conjugating enzyme]-L-cysteine + [acceptor protein]-L-lysine = [E2 ubiquitin-conjugating enzyme]-L-cysteine + N(6)-ubiquitinyl-[acceptor protein]-L-lysine.. It functions in the pathway protein modification; protein ubiquitination. Functionally, E3 ubiquitin ligase catalyzing the covalent attachment of ubiquitin moieties onto substrate proteins. Acts as a key developmental timer that helps ensure puberty begins at the appropriate age, by inhibiting premature activation of the reproductive hormone cascade. Epigenetically regulates GNRH1 transcription by disrupting the binding of methyl-DNA binding protein 3/MBD3 to the promoter of GNRH1. Mechanistically, mediates the non-proteolytic ubiquitination of MBD3 at multiple sites with 'Lys27' ubiquitin linkages and thereby regulates the methylation status of the genome, including GNRH1 promoter. Modulates the stability and translation of GNRH1 mRNA by mediating the non-proteolytic ubiquitination of PABP family members PABPC1, PABPC3 and PABPC4 at multiple sites. Also participates in the maintenance of genomic and epigenomic stability by regulating the abundance of APEX2 via 'Lys-48'-linked ubiquitination. The chain is E3 ubiquitin-protein ligase makorin-3 (Mkrn3) from Mus musculus (Mouse).